The primary structure comprises 190 residues: Dynein axonemal light chain 1 (190 aa).

The residue at position 2 (Ala-2) is an N-acetylalanine. 4 LRR repeats span residues 49–70 (NCEK…NGLK), 71–92 (NLRI…EAVG), 94–115 (TLEE…HVMK), and 116–137 (KLKI…VKLA). At Ser-56 the chain carries Phosphoserine. Residues 150-190 (NPLEEKHSAEGNWVEEATKRVPKLKKLDGTPVIKEDEEEDN) form the LRRCT domain.

This sequence belongs to the dynein light chain LC1-type family. In terms of assembly, interacts with ZMYND10 (via C-terminus). Interacts with DNAH5, a outer arm dynein heavy chain. Interacts with tubulin located within the A-tubule of the outer doublets in a ATP-independent manner.

The protein localises to the cytoplasm. It is found in the cytoskeleton. It localises to the cilium axoneme. In terms of biological role, part of the multisubunit axonemal ATPase complexes that generate the force for cilia motility and govern beat frequency. Component of the outer arm dynein (ODA). May be involved in a mechanosensory feedback mechanism controlling ODA activity based on external conformational cues by tethering the outer arm dynein heavy chain (DNAH5) to the microtubule within the axoneme. Important for ciliary function in the airways and for the function of the cilia that produce the nodal flow essential for the determination of the left-right asymmetry. The sequence is that of Dynein axonemal light chain 1 (DNAL1) from Bos taurus (Bovine).